Consider the following 360-residue polypeptide: Spore germination protein GerQB (360 aa).

Transmembrane regions (helical) follow at residues 11–31 (SPYM…MLGF), 45–65 (ISTL…YQIL), 84–104 (IGGL…ATTL), 116–136 (FPSI…YYIV), 142–162 (VVAG…FTFF), 188–208 (MKGN…YPFI), 220–240 (YANL…LAFF), 270–290 (IIVS…LWGV), 300–320 (IKQK…SFFL), and 331–351 (TWTG…LWLI).

Belongs to the amino acid-polyamine-organocation (APC) superfamily. Spore germination protein (SGP) (TC 2.A.3.9) family.

The protein localises to the membrane. In terms of biological role, required for the germination response to inosine. Has no role in L-alanine germination. This chain is Spore germination protein GerQB (gerQB), found in Bacillus cereus.